Reading from the N-terminus, the 284-residue chain is RNase adapter protein RapZ (284 aa).

Residue 8 to 15 coordinates ATP; that stretch reads GRSGSGKS. 56 to 59 provides a ligand contact to GTP; it reads DVRN. The RNA-binding stretch occupies residues 266 to 284; it reads RSRGKNVQSRHRTLEKRKS.

Belongs to the RapZ-like family. RapZ subfamily. As to quaternary structure, homotrimer.

Modulates the synthesis of GlmS, by affecting the processing and stability of the regulatory small RNA GlmZ. When glucosamine-6-phosphate (GlcN6P) concentrations are high in the cell, RapZ binds GlmZ and targets it to cleavage by RNase E. Consequently, GlmZ is inactivated and unable to activate GlmS synthesis. Under low GlcN6P concentrations, RapZ is sequestered and inactivated by an other regulatory small RNA, GlmY, preventing GlmZ degradation and leading to synthesis of GlmS. This Klebsiella pneumoniae (strain 342) protein is RNase adapter protein RapZ.